The sequence spans 311 residues: Homoserine kinase (311 aa).

Proline 88–alanine 98 is an ATP binding site.

Belongs to the GHMP kinase family. Homoserine kinase subfamily.

Its subcellular location is the cytoplasm. The catalysed reaction is L-homoserine + ATP = O-phospho-L-homoserine + ADP + H(+). Its pathway is amino-acid biosynthesis; L-threonine biosynthesis; L-threonine from L-aspartate: step 4/5. Functionally, catalyzes the ATP-dependent phosphorylation of L-homoserine to L-homoserine phosphate. The protein is Homoserine kinase of Saccharolobus islandicus (strain L.S.2.15 / Lassen #1) (Sulfolobus islandicus).